The sequence spans 230 residues: Bidirectional sugar transporter SWEET16 (230 aa).

The Extracellular portion of the chain corresponds to 1-3 (MAD). Residues 4-24 (LSFYVGVIGNVISVLVFLSPV) traverse the membrane as a helical segment. One can recognise a MtN3/slv 1 domain in the interval 6-92 (FYVGVIGNVI…LIFLFFVPKS (87 aa)). Residues 25-40 (ETFWRIVQRRSTEEYE) are Cytoplasmic-facing. The chain crosses the membrane as a helical span at residues 41 to 61 (CFPYICTLMSSSLWTYYGIVT). The Extracellular segment spans residues 62-69 (PGEYLVST). A helical membrane pass occupies residues 70–90 (VNGFGALAESIYVLIFLFFVP). The Cytoplasmic segment spans residues 91–93 (KSR). The helical transmembrane segment at 94–114 (FLKTVVVVLALNVCFPVIAIA) threads the bilayer. The Extracellular segment spans residues 115-128 (GTRTLFGDANSRSS). The helical transmembrane segment at 129 to 149 (SMGFICATLNIIMYGSPLSAI) threads the bilayer. The 84-residue stretch at 129–212 (SMGFICATLN…LLIYAYYRNA (84 aa)) folds into the MtN3/slv 2 domain. At 150–162 (KTVVTTRSVQFMP) the chain is on the cytoplasmic side. The chain crosses the membrane as a helical span at residues 163-183 (FWLSFFLFLNGAIWGVYALLL). Over 184-185 (HD) the chain is Extracellular. Residues 186–206 (MFLLVPNGMGFFLGIMQLLIY) form a helical membrane-spanning segment. The Cytoplasmic segment spans residues 207–230 (AYYRNAEPIVEDEEGLIPNQPLLA).

The protein belongs to the SWEET sugar transporter family. As to quaternary structure, forms homooligomers and heterooligomers with SWEET1, SWEET7, SWEET8, SWEET9 and SWEET17. In terms of tissue distribution, mostly expressed in the cortex of mature roots, and, to a lower extent, in aerial organs such as leaves, stems, and flowers. Mainly present in vascular parenchyma cells, especially in the petiole vasculature, flower stalks and at the base of individual, not fully developed flowers.

Its subcellular location is the vacuole membrane. In terms of biological role, mediates both low-affinity uptake and efflux of sugar across the vacuolar membrane. Regulates sugars homeostasis in leaves and roots by exporting/importing them through the tonoplast regarding metabolic demand. Acts as a vacuolar hexose transporter, such as glucose (Glc), fructose (Fru), and sucrose (Suc). The chain is Bidirectional sugar transporter SWEET16 from Arabidopsis thaliana (Mouse-ear cress).